Consider the following 726-residue polypeptide: MPSHPNFIFRWIGLFSDKFRRQTTGIDENSNLQINGGDSSSSGSDETPVLSSVECYACTQVGVPAFHSTSCDQAHAPEWRASAGSSLVPIQEGSVPNPARTRFRRLKGPFGEVLDPRSKRVQRWNRALLLARGMALAVDPLFFYALSIGRTTGPACLYMDGAFAAVVTVLRTCLDAVHLWHVWLQFRLAYVSRESLVVGCGKLVWDPRAIASHYARSLTGFWFDVIVILPVPQAVFWLVVPKLIREEKVKLIMTILLLIFLFQFLPKIYHCICLMRRMQKVTGYIFGTIWWGFALNLIAYFIASHVAGGCWYVLAIQRVASCIRQQCMRTGNCNLSLACKEEVCYQFVSPTSTVGYPCLSGNLTSVVNKPMCLDSNGPFRYGIYRWALPVISSNSLAVKILYPIFWGLMTLSTFANDLEPTSNWLEVIFSIVMVLSGLLLFTLLIGNIQVFLHAVMAKKRKMQIRCRDMEWWMKRRQLPSRLRQRVRRFERQRWNALGGEDELELIHDLPPGLRRDIKRYLCFDLINKVPLFRGMDDLILDNICDRAKPRVFSKDEKIIREGDPVQRMIFIMRGRVKRIQSLSKGVLATSTLEPGGYLGDELLSWCLRRPFLDRLPPSSATFVCLENIEAFSLGSEDLRYITDHFRYKFANERLKRTARYYSSNWRTWAAVNIQMAWRRRRKRTRGENIGGSMSPVSENSIEGNSERRLLQYAAMFMSIRPHDHLE.

Over 1-127 (MPSHPNFIFR…SKRVQRWNRA (127 aa)) the chain is Cytoplasmic. The tract at residues 26 to 46 (IDENSNLQINGGDSSSSGSDE) is disordered. The span at 36-45 (GGDSSSSGSD) shows a compositional bias: low complexity. Residues 128–148 (LLLARGMALAVDPLFFYALSI) form a helical membrane-spanning segment. At 149-162 (GRTTGPACLYMDGA) the chain is on the extracellular side. Residues 163–183 (FAAVVTVLRTCLDAVHLWHVW) form a helical membrane-spanning segment. Residues 184–219 (LQFRLAYVSRESLVVGCGKLVWDPRAIASHYARSLT) lie on the Cytoplasmic side of the membrane. A helical membrane pass occupies residues 220–240 (GFWFDVIVILPVPQAVFWLVV). At 241 to 254 (PKLIREEKVKLIMT) the chain is on the extracellular side. Residues 255 to 275 (ILLLIFLFQFLPKIYHCICLM) form a helical membrane-spanning segment. Residues 276–282 (RRMQKVT) are Cytoplasmic-facing. A helical transmembrane segment spans residues 283–303 (GYIFGTIWWGFALNLIAYFIA). The Extracellular portion of the chain corresponds to 304–424 (SHVAGGCWYV…ANDLEPTSNW (121 aa)). The helical transmembrane segment at 425-445 (LEVIFSIVMVLSGLLLFTLLI) threads the bilayer. The Cytoplasmic portion of the chain corresponds to 446–726 (GNIQVFLHAV…MSIRPHDHLE (281 aa)). A nucleoside 3',5'-cyclic phosphate contacts are provided by residues 531-661 (LFRG…ARYY) and Asp-600. Residues 645–661 (FRYKFANERLKRTARYY) are calmodulin-binding. Positions 666–695 (RTWAAVNIQMAWRRRRKRTRGENIGGSMSP) constitute an IQ domain.

This sequence belongs to the cyclic nucleotide-gated cation channel (TC 1.A.1.5) family. As to quaternary structure, homotetramer or heterotetramer (Potential). Binds calmodulin-1/4 with a higher affinity than calmodulin-2/3/5. Expressed in the whole plant but only weakly in roots. Strongly expressed in the expanded cotyledons of 14-day-old seedlings and detected later in leaves after the transition to flowering. Also detected in flowers during organ senescence and in the dehiscence zone of siliques.

The protein resides in the cell membrane. Its function is as follows. Acts as a cyclic nucleotide-gated ion channel. Permeable to potassium and calcium in a cyclic nucleotide-dependent fashion (cAMP or cGMP). Could also transport lithium, cesium and rubium and displays a strong selectivity against sodium. Seems to directly participate in pathogen-induced calcium influx. May function in homeostasis, re-establishing ionic balance after defense action and/or other stimuli. Could mediate the initiation of the developmentally regulated cell death programs. The polypeptide is Cyclic nucleotide-gated ion channel 2 (CNGC2) (Arabidopsis thaliana (Mouse-ear cress)).